Consider the following 229-residue polypeptide: NAD-dependent protein deacetylase (229 aa).

The Deacetylase sirtuin-type domain occupies 1 to 229; that stretch reads MNNLKEAIKQ…NDAVKVFAEI (229 aa). NAD(+)-binding residues include Ala-20, Arg-32, Gln-96, Ile-98, Asp-99, His-114, Thr-181, Ser-182, Asn-205, and Val-223. Ile-98 and Asp-99 together coordinate nicotinamide. Catalysis depends on His-114, which acts as the Proton acceptor.

It belongs to the sirtuin family. Class U subfamily.

It is found in the cytoplasm. It catalyses the reaction N(6)-acetyl-L-lysyl-[protein] + NAD(+) + H2O = 2''-O-acetyl-ADP-D-ribose + nicotinamide + L-lysyl-[protein]. Its function is as follows. NAD-dependent protein deacetylase which modulates the activities of several enzymes which are inactive in their acetylated form. The polypeptide is NAD-dependent protein deacetylase (Listeria innocua serovar 6a (strain ATCC BAA-680 / CLIP 11262)).